Consider the following 370-residue polypeptide: Queuine tRNA-ribosyltransferase (370 aa).

Asp89 serves as the catalytic Proton acceptor. Substrate-binding positions include Asp89–Phe93, Asp143, Gln187, and Gly214. The segment at Gly245 to Asp251 is RNA binding. Asp264 acts as the Nucleophile in catalysis. Residues Thr269–Arg273 form an RNA binding; important for wobble base 34 recognition region. Zn(2+)-binding residues include Cys302, Cys304, Cys307, and His333.

This sequence belongs to the queuine tRNA-ribosyltransferase family. Homodimer. Within each dimer, one monomer is responsible for RNA recognition and catalysis, while the other monomer binds to the replacement base PreQ1. Requires Zn(2+) as cofactor.

The catalysed reaction is 7-aminomethyl-7-carbaguanine + guanosine(34) in tRNA = 7-aminomethyl-7-carbaguanosine(34) in tRNA + guanine. It participates in tRNA modification; tRNA-queuosine biosynthesis. Functionally, catalyzes the base-exchange of a guanine (G) residue with the queuine precursor 7-aminomethyl-7-deazaguanine (PreQ1) at position 34 (anticodon wobble position) in tRNAs with GU(N) anticodons (tRNA-Asp, -Asn, -His and -Tyr). Catalysis occurs through a double-displacement mechanism. The nucleophile active site attacks the C1' of nucleotide 34 to detach the guanine base from the RNA, forming a covalent enzyme-RNA intermediate. The proton acceptor active site deprotonates the incoming PreQ1, allowing a nucleophilic attack on the C1' of the ribose to form the product. After dissociation, two additional enzymatic reactions on the tRNA convert PreQ1 to queuine (Q), resulting in the hypermodified nucleoside queuosine (7-(((4,5-cis-dihydroxy-2-cyclopenten-1-yl)amino)methyl)-7-deazaguanosine). This chain is Queuine tRNA-ribosyltransferase, found in Azoarcus sp. (strain BH72).